The following is a 131-amino-acid chain: Interleukin-13 (131 aa).

The signal sequence occupies residues 1-18; the sequence is MALWLTVVIALTCLGGLA. Asparagine 38, asparagine 48, asparagine 56, and asparagine 71 each carry an N-linked (GlcNAc...) asparagine glycan. Cystine bridges form between cysteine 47–cysteine 75 and cysteine 63–cysteine 89.

The protein belongs to the IL-4/IL-13 family. Interacts with IL13RA2.

It is found in the secreted. Its function is as follows. Cytokine that plays important roles in allergic inflammation and immune response to parasite infection. Synergizes with IL2 in regulating interferon-gamma synthesis. Stimulates B-cell proliferation, and activation of eosinophils, basophils, and mast cells. Plays an important role in controlling IL33 activity by modulating the production of transmembrane and soluble forms of interleukin-1 receptor-like 1/IL1RL1. Displays the capacity to antagonize Th1-driven proinflammatory immune response and downregulates synthesis of many proinflammatory cytokines including IL1, IL6, IL10, IL12 and TNF-alpha through a mechanism that partially involves suppression of NF-kappa-B. Also functions on nonhematopoietic cells, including endothelial cells where it induces vascular cell adhesion protein 1/VCAM1, which is important in the recruitment of eosinophils. Exerts its biological effects through its receptors which comprises the IL4R chain and the IL13RA1 chain, to activate JAK1 and TYK2, leading to the activation of STAT6. Aside from IL13RA1, another receptor IL13RA2 acts as a high affinity decoy for IL13 and mediates internalization and depletion of extracellular IL13. This is Interleukin-13 (IL13) from Canis lupus familiaris (Dog).